Consider the following 387-residue polypeptide: Acyl-[acyl-carrier-protein] 6-desaturase (387 aa).

A chloroplast-targeting transit peptide spans 1-29 (MALVFKSIGAHKTPPCTLNLASPALYHTR). The Fe cation site is built by Glu-131, Glu-169, His-172, Glu-222, Glu-255, and His-258.

The protein belongs to the fatty acid desaturase type 2 family. Fe(2+) is required as a cofactor.

The protein resides in the plastid. Its subcellular location is the chloroplast. It carries out the reaction hexadecanoyl-[ACP] + 2 reduced [2Fe-2S]-[ferredoxin] + O2 + 2 H(+) = (6Z)-hexadecenoyl-[ACP] + 2 oxidized [2Fe-2S]-[ferredoxin] + 2 H2O. Its pathway is lipid metabolism; fatty acid metabolism. With respect to regulation, inhibited by KCN or H(2)O(2). Its function is as follows. Delta(6) fatty acid desaturase introducing a cis double bond at carbon 6 of palmitoyl-[acyl-carrier protein](16:0-ACP), producing 16:1(6Z)-ACP. No activity with the coenzyme A ester of the fatty acid. The position of the double bond is determined by its distance from the carboxyl end of the fatty acid. Low activity with several saturated acyl-[acyl-carrier protein]s, including 14:0-ACP and 18:0-ACP. Requires reduced ferredoxin for detectable in vitro activity. The polypeptide is Acyl-[acyl-carrier-protein] 6-desaturase (Thunbergia alata (Black-eyed Susan vine)).